Reading from the N-terminus, the 166-residue chain is Small ribosomal subunit protein bS6 (166 aa).

The disordered stretch occupies residues 97–166 (EEGPSAMMRK…EEAETATDGE (70 aa)). The span at 105 to 159 (RKADRDRERDDRGGGFRGEREGGFRGDREGGFRGGDRDGGGFRGDRGPRRPREEA) shows a compositional bias: basic and acidic residues.

It belongs to the bacterial ribosomal protein bS6 family.

Its function is as follows. Binds together with bS18 to 16S ribosomal RNA. This chain is Small ribosomal subunit protein bS6, found in Bradyrhizobium diazoefficiens (strain JCM 10833 / BCRC 13528 / IAM 13628 / NBRC 14792 / USDA 110).